The primary structure comprises 740 residues: E3 ubiquitin-protein ligase TRIM9 (740 aa).

The segment at 7 to 30 (CPTCKQLYANPVLLPCFHALCLGC) adopts an RING-type; degenerate zinc-finger fold. Over residues 64-73 (GNGGGAGGGA) the composition is skewed to gly residues. The disordered stretch occupies residues 64–114 (GNGGGAGGGAAAPVTNPNGPGTRHSSHSSAASTASSNTGSESVTSDQDQSD). Residues 74-105 (AAPVTNPNGPGTRHSSHSSAASTASSNTGSES) show a composition bias toward low complexity. The B box-type 1; atypical zinc finger occupies 195 to 244 (REALRCQMCETDPKVASLICEQCEIRYCDACRELTHPARGPLAKHTLVKP). Zn(2+)-binding residues include Cys-200, Cys-203, Cys-225, His-230, Cys-255, His-258, Cys-277, and His-283. The B box-type 2 zinc-finger motif lies at 250–291 (QRESVCGEHEETLSQYCLSCKAPACGLCIGELRHQAHDVQSI). Residues 294 to 324 (TCKAQKTELSHNLQQLSEKARSTTEFIQRLK) adopt a coiled-coil conformation. Residues 399–459 (LKETDSAAFL…ARAIDNLNFI (61 aa)) form the COS domain. The 94-residue stretch at 474–567 (APMTPTILPS…ELIGLQTAEV (94 aa)) folds into the Fibronectin type-III domain. The region spanning 549 to 736 (NSAGEGEYSE…TMHTAMDAPK (188 aa)) is the B30.2/SPRY domain.

The protein belongs to the TRIM/RBCC family. In terms of assembly, interacts (via fibronectin type-III domain) with pico. Interacts (via SPRY domain) with netrin receptor fra.

It localises to the cell projection. It is found in the axon. Its subcellular location is the perikaryon. It carries out the reaction S-ubiquitinyl-[E2 ubiquitin-conjugating enzyme]-L-cysteine + [acceptor protein]-L-lysine = [E2 ubiquitin-conjugating enzyme]-L-cysteine + N(6)-ubiquitinyl-[acceptor protein]-L-lysine.. The protein operates within protein modification; protein ubiquitination. Functionally, E3 ubiquitin-protein ligase activity. During embryonic and larval development, regulates the pattern of axonal projections of class IV nociceptive sensory neurons (C4da) downstream of netrin receptor fra. Regulates fine-scale topography of C4da axon terminals upon neuronal activity. During eye development, consolidates the attachment of R8 photoreceptor growth cones to the target medulla layer, probably downstream of fra. This is E3 ubiquitin-protein ligase TRIM9 from Drosophila melanogaster (Fruit fly).